Here is a 259-residue protein sequence, read N- to C-terminus: L-arginine-binding protein (259 aa).

Residues 1-21 form the signal peptide; it reads MKKLALLGALALSVLSLPTFA.

This sequence belongs to the bacterial solute-binding protein 3 family.

The protein localises to the periplasm. Its function is as follows. Binds L-arginine with high affinity. Shows no measurable affinity for L-ornithine. This Pseudomonas aeruginosa (strain ATCC 15692 / DSM 22644 / CIP 104116 / JCM 14847 / LMG 12228 / 1C / PRS 101 / PAO1) protein is L-arginine-binding protein.